A 518-amino-acid chain; its full sequence is Light-independent protochlorophyllide reductase subunit B (518 aa).

Aspartate 36 is a [4Fe-4S] cluster binding site. Aspartate 299 serves as the catalytic Proton donor. Residue 434–435 (GM) participates in substrate binding.

The protein belongs to the ChlB/BchB/BchZ family. As to quaternary structure, protochlorophyllide reductase is composed of three subunits; ChlL, ChlN and ChlB. Forms a heterotetramer of two ChlB and two ChlN subunits. [4Fe-4S] cluster serves as cofactor.

It localises to the plastid. Its subcellular location is the chloroplast. It catalyses the reaction chlorophyllide a + oxidized 2[4Fe-4S]-[ferredoxin] + 2 ADP + 2 phosphate = protochlorophyllide a + reduced 2[4Fe-4S]-[ferredoxin] + 2 ATP + 2 H2O. It participates in porphyrin-containing compound metabolism; chlorophyll biosynthesis (light-independent). Its function is as follows. Component of the dark-operative protochlorophyllide reductase (DPOR) that uses Mg-ATP and reduced ferredoxin to reduce ring D of protochlorophyllide (Pchlide) to form chlorophyllide a (Chlide). This reaction is light-independent. The NB-protein (ChlN-ChlB) is the catalytic component of the complex. The chain is Light-independent protochlorophyllide reductase subunit B from Adiantum capillus-veneris (Maidenhair fern).